The sequence spans 301 residues: Cardiolipin synthase (CMP-forming) (301 aa).

The disordered stretch occupies residues 70 to 93; it reads SGAGKAAPRPAAGAGAAAEAPGGQ. Residues 71–93 are compositionally biased toward low complexity; that stretch reads GAGKAAPRPAAGAGAAAEAPGGQ. 5 consecutive transmembrane segments (helical) span residues 109–129, 133–153, 190–212, 250–270, and 272–292; these read IPNM…YLII, FNIA…DGFI, IPVP…VFYV, LILV…SIYL, and ILWC…YHYG.

Belongs to the CDP-alcohol phosphatidyltransferase class-I family. The cofactor is a divalent metal cation. In terms of tissue distribution, highly expressed in tissues such as heart, skeletal muscle and liver.

It is found in the mitochondrion inner membrane. The enzyme catalyses a CDP-1,2-diacyl-sn-glycerol + a 1,2-diacyl-sn-glycero-3-phospho-(1'-sn-glycerol) = a cardiolipin + CMP + H(+). Its function is as follows. Catalyzes the synthesis of cardiolipin (CL) (diphosphatidylglycerol) by specifically transferring a phosphatidyl group from CDP-diacylglycerol to phosphatidylglycerol (PG). CL is a key phospholipid in mitochondrial membranes and plays important roles in maintaining the functional integrity and dynamics of mitochondria under both optimal and stress conditions. This chain is Cardiolipin synthase (CMP-forming) (CRLS1), found in Homo sapiens (Human).